Reading from the N-terminus, the 334-residue chain is UDP-N-acetylglucosamine 4,6-dehydratase (inverting) (334 aa).

Residues 13-16 (TGSF), 37-42 (SRDELK), 61-62 (DV), alanine 81, lysine 85, and 123-124 (LS) each bind NADP(+). Position 85 (lysine 85) interacts with substrate. The active site involves lysine 127. 2 residues coordinate NADP(+): tyrosine 135 and lysine 139. Residue asparagine 167 participates in substrate binding. 168–172 (VVGSR) serves as a coordination point for NADP(+). The substrate site is built by valine 175, threonine 193, arginine 252, and glutamate 255.

The protein belongs to the polysaccharide synthase family. In terms of assembly, homohexamer. NADP(+) is required as a cofactor.

It catalyses the reaction UDP-N-acetyl-alpha-D-glucosamine = UDP-2-acetamido-2,6-dideoxy-beta-L-arabino-hex-4-ulose + H2O. In terms of biological role, catalyzes the first step in the biosynthesis of pseudaminic acid, a sialic-acid-like sugar that is used to modify flagellin. Has both C6 dehydratase and C5 epimerase activities that result in the production of both UDP-2-acetamido-2,6-dideoxy-beta-L-arabino-4-hexulose and UDP-2-acetamido-2,6-dideoxy-alpha-D-xylo-4-hexulose. The sequence is that of UDP-N-acetylglucosamine 4,6-dehydratase (inverting) (pseB) from Campylobacter jejuni subsp. jejuni serotype O:23/36 (strain 81-176).